The following is a 217-amino-acid chain: Transmembrane protein 247 (217 aa).

Over residues 1–10 the composition is skewed to basic and acidic residues; that stretch reads MATEDREMME. The disordered stretch occupies residues 1–87; sequence MATEDREMME…GPATTKGQAG (87 aa). Positions 109–154 form a coiled coil; sequence RERDAEMELEKVRMEFELKRLKYLHEENERQRQHEEVMEQLQQQAT. 2 consecutive transmembrane segments (helical) span residues 165-185 and 192-212; these read LLLP…IHII and IFFL…LCLI.

Its subcellular location is the membrane. The chain is Transmembrane protein 247 from Bos taurus (Bovine).